The sequence spans 132 residues: Small ribosomal subunit protein uS11 (132 aa).

This sequence belongs to the universal ribosomal protein uS11 family. As to quaternary structure, part of the 30S ribosomal subunit. Interacts with proteins S7 and S18. Binds to IF-3.

Functionally, located on the platform of the 30S subunit, it bridges several disparate RNA helices of the 16S rRNA. Forms part of the Shine-Dalgarno cleft in the 70S ribosome. The protein is Small ribosomal subunit protein uS11 of Lachnoclostridium phytofermentans (strain ATCC 700394 / DSM 18823 / ISDg) (Clostridium phytofermentans).